A 307-amino-acid chain; its full sequence is Putative transcription factor bHLH086 (307 aa).

Disordered stretches follow at residues 1-49 (MSLI…DHQN) and 167-215 (HEST…QSLA). 2 stretches are compositionally biased toward polar residues: residues 12 to 28 (NYIS…SPQN) and 183 to 197 (GENT…SGTN). Positions 207 to 220 (SPKDPQSLAAKNRR) are basic motif. A bHLH domain is found at 207 to 256 (SPKDPQSLAAKNRRERISERLKVLQELVPNGTKVDLVTMLEKAIGYVKFL). The interval 221–256 (ERISERLKVLQELVPNGTKVDLVTMLEKAIGYVKFL) is helix-loop-helix motif.

Homodimer. Forms heterodimers with RHD6. Interacts with TIFY10B/JAZ2, TIFY6A/JAZ4, TIFY5A/JAZ8, TIFY7/JAZ9 and TIFY9/JAZ10.

The protein resides in the nucleus. Transcription factor that is specifically required for the development of root hairs. Acts with RHD6 to positively regulate root hair development. Acts downstream of genes that regulate epidermal pattern formation, such as GL2. Acts with RHD6 as transcription factor that integrates a jasmonate (JA) signaling pathway that stimulates root hair growth. In Arabidopsis thaliana (Mouse-ear cress), this protein is Putative transcription factor bHLH086.